The following is a 48-amino-acid chain: DNA-directed RNA polymerase subunit Rpo12 (48 aa).

Residues C9, C26, and C29 each coordinate Zn(2+).

Belongs to the archaeal Rpo12/eukaryotic RPC10 RNA polymerase subunit family. As to quaternary structure, part of the RNA polymerase complex. The cofactor is Zn(2+).

It localises to the cytoplasm. The enzyme catalyses RNA(n) + a ribonucleoside 5'-triphosphate = RNA(n+1) + diphosphate. In terms of biological role, DNA-dependent RNA polymerase (RNAP) catalyzes the transcription of DNA into RNA using the four ribonucleoside triphosphates as substrates. This Sulfurisphaera tokodaii (strain DSM 16993 / JCM 10545 / NBRC 100140 / 7) (Sulfolobus tokodaii) protein is DNA-directed RNA polymerase subunit Rpo12.